The primary structure comprises 63 residues: Bowman-Birk type proteinase inhibitor (63 aa).

Cystine bridges form between Cys-7–Cys-60, Cys-8–Cys-23, Cys-11–Cys-56, Cys-13–Cys-21, Cys-30–Cys-37, Cys-34–Cys-49, and Cys-39–Cys-47.

As to quaternary structure, monomer.

Functionally, inhibits trypsin stoichiometrically at the molar ratio of 1:2, with a dissociation constant of 4.2 nM. Does not inhibit chymotrypsin. In Lupinus albus (White lupine), this protein is Bowman-Birk type proteinase inhibitor.